The sequence spans 941 residues: Zinc finger protein su(Hw) (941 aa).

Disordered stretches follow at residues 1–97 and 176–211; these read MSAS…APAA and ENNN…NSSQ. The span at 47–57 shows a compositional bias: low complexity; that stretch reads STTTTTSRTPS. Positions 185-202 are enriched in acidic residues; sequence VTEDDEDLGEDGDEDGED. Thr186 bears the Phosphothreonine mark. A C2H2-type 1; atypical zinc finger spans residues 220-242; the sequence is HVCGKCYKTFRRVQSLKKHLEFC. The C2H2-type 2 zinc finger occupies 290–313; that stretch reads INCPDCPKSFKTQTSYERHIFITH. A C2H2-type 3; atypical zinc finger spans residues 319-341; it reads FPCSICNANLRSEALLALHEEQH. C2H2-type zinc fingers lie at residues 348-366, 380-402, 413-435, 441-463, 469-491, 497-519, 523-545, 553-577, and 596-619; these read YACK…LKRH, MSCK…LKQH, YMCH…IRTH, FDCD…RRYH, YSCT…MKRH, HKCD…SKTH, FPCE…VKTH, FSCA…EGKH, and TDCA…RTVH. Residues 760–860 are interaction with mod(mdg4); sequence ILTEEDIKLK…PIDDVIEYVL (101 aa). The segment at 864 to 941 is disordered; sequence DQDEGGLDKD…KKPVGEQEKA (78 aa). Composition is skewed to basic and acidic residues over residues 869–880 and 891–941; these read GLDKDNESHSGD and KTNE…QEKA.

As to quaternary structure, component of the gypsy chromatin insulator complex, composed of Cp190, mod(mdg4) and su(Hw). The gypsy chromatin insulator complex interacts with Topors via mod(mdg4) and su(Hw). Upon ecdysone stimulation, interacts with Nup98.

It localises to the nucleus. It is found in the chromosome. Functionally, component of the gypsy chromatin insulator complex which is required for the function of the gypsy chromatin insulator and other endogenous chromatin insulators. Chromatin insulators are regulatory elements which establish independent domains of transcriptional activity within eukaryotic genomes. Insulators have two defining properties; they can block the communication between an enhancer and a promoter when placed between them and can also buffer transgenes from position effect variegation (PEV). Insulators are proposed to structure the chromatin fiber into independent domains of differing transcriptional potential by promoting the formation of distinct chromatin loops. This chromatin looping may involve the formation of insulator bodies, where homotypic interactions between individual subunits of the insulator complex could promote the clustering of widely spaced insulators at the nuclear periphery. Within the gypsy insulator complex, this protein binds specifically to a region of the gypsy element located 3' of the 5' long terminal repeat (LTR), and may also mediate interaction with other endogenous insulators at sites distinct from those recognized by Cp190. Cooperates with pita and cliff to recruit Cp190 and regulate insulator function at the front-ultraabdominal (Fub) boundary. The sequence is that of Zinc finger protein su(Hw) from Drosophila melanogaster (Fruit fly).